The primary structure comprises 503 residues: AMP phosphorylase (503 aa).

AMP contacts are provided by residues Gly168, 194–199 (SRAITS), and Thr203. The active-site Proton donor is Asp256. AMP-binding residues include Ser264 and Lys288.

It belongs to the thymidine/pyrimidine-nucleoside phosphorylase family. Type 2 subfamily.

It carries out the reaction AMP + phosphate = alpha-D-ribose 1,5-bisphosphate + adenine. The enzyme catalyses CMP + phosphate = cytosine + alpha-D-ribose 1,5-bisphosphate. It catalyses the reaction UMP + phosphate = alpha-D-ribose 1,5-bisphosphate + uracil. Functionally, catalyzes the conversion of AMP and phosphate to adenine and ribose 1,5-bisphosphate (R15P). Exhibits phosphorylase activity toward CMP and UMP in addition to AMP. Functions in an archaeal AMP degradation pathway, together with R15P isomerase and RubisCO. In Pyrococcus horikoshii (strain ATCC 700860 / DSM 12428 / JCM 9974 / NBRC 100139 / OT-3), this protein is AMP phosphorylase.